The primary structure comprises 190 residues: Threonylcarbamoyl-AMP synthase (190 aa).

The YrdC-like domain occupies 7 to 190; that stretch reads ADAISFIVDV…ALTGELFRQG (184 aa).

Belongs to the SUA5 family. TsaC subfamily.

The protein localises to the cytoplasm. The enzyme catalyses L-threonine + hydrogencarbonate + ATP = L-threonylcarbamoyladenylate + diphosphate + H2O. Required for the formation of a threonylcarbamoyl group on adenosine at position 37 (t(6)A37) in tRNAs that read codons beginning with adenine. Catalyzes the conversion of L-threonine, HCO(3)(-)/CO(2) and ATP to give threonylcarbamoyl-AMP (TC-AMP) as the acyladenylate intermediate, with the release of diphosphate. This chain is Threonylcarbamoyl-AMP synthase, found in Cronobacter sakazakii (strain ATCC BAA-894) (Enterobacter sakazakii).